A 262-amino-acid polypeptide reads, in one-letter code: Indole-3-glycerol phosphate synthase (262 aa).

This sequence belongs to the TrpC family.

It catalyses the reaction 1-(2-carboxyphenylamino)-1-deoxy-D-ribulose 5-phosphate + H(+) = (1S,2R)-1-C-(indol-3-yl)glycerol 3-phosphate + CO2 + H2O. It participates in amino-acid biosynthesis; L-tryptophan biosynthesis; L-tryptophan from chorismate: step 4/5. In Leuconostoc mesenteroides subsp. mesenteroides (strain ATCC 8293 / DSM 20343 / BCRC 11652 / CCM 1803 / JCM 6124 / NCDO 523 / NBRC 100496 / NCIMB 8023 / NCTC 12954 / NRRL B-1118 / 37Y), this protein is Indole-3-glycerol phosphate synthase.